A 219-amino-acid chain; its full sequence is Urease subunit gamma/beta (219 aa).

A urease gamma region spans residues 1-101 (MFLTPREQEK…LVTVRNPIKS (101 aa)). The tract at residues 102–219 (SKKTLNTYII…IKRAKERGFA (118 aa)) is urease beta.

This sequence in the N-terminal section; belongs to the urease gamma subunit family. In the C-terminal section; belongs to the urease beta subunit family. Heterohexamer of 3 UreC (alpha) and 3 UreAB (gamma/beta) subunits.

The protein localises to the cytoplasm. It carries out the reaction urea + 2 H2O + H(+) = hydrogencarbonate + 2 NH4(+). Its pathway is nitrogen metabolism; urea degradation; CO(2) and NH(3) from urea (urease route): step 1/1. The polypeptide is Urease subunit gamma/beta (Sulfurisphaera tokodaii (strain DSM 16993 / JCM 10545 / NBRC 100140 / 7) (Sulfolobus tokodaii)).